Consider the following 61-residue polypeptide: Photosystem II reaction center protein K (61 aa).

A propeptide spanning residues 1 to 24 (MPNILSLTCICFNSVIYPTSFFFA) is cleaved from the precursor. The chain crosses the membrane as a helical span at residues 32–52 (IFNPIVDFMPVIPVLFFLLAF).

It belongs to the PsbK family. PSII is composed of 1 copy each of membrane proteins PsbA, PsbB, PsbC, PsbD, PsbE, PsbF, PsbH, PsbI, PsbJ, PsbK, PsbL, PsbM, PsbT, PsbX, PsbY, PsbZ, Psb30/Ycf12, at least 3 peripheral proteins of the oxygen-evolving complex and a large number of cofactors. It forms dimeric complexes.

The protein resides in the plastid. The protein localises to the chloroplast thylakoid membrane. One of the components of the core complex of photosystem II (PSII). PSII is a light-driven water:plastoquinone oxidoreductase that uses light energy to abstract electrons from H(2)O, generating O(2) and a proton gradient subsequently used for ATP formation. It consists of a core antenna complex that captures photons, and an electron transfer chain that converts photonic excitation into a charge separation. The polypeptide is Photosystem II reaction center protein K (Oryza nivara (Indian wild rice)).